The sequence spans 297 residues: tRNA pseudouridine synthase A (297 aa).

Residue Asp57 is the Nucleophile of the active site. A substrate-binding site is contributed by Tyr115.

It belongs to the tRNA pseudouridine synthase TruA family. Homodimer.

The enzyme catalyses uridine(38/39/40) in tRNA = pseudouridine(38/39/40) in tRNA. Formation of pseudouridine at positions 38, 39 and 40 in the anticodon stem and loop of transfer RNAs. This Nitratidesulfovibrio vulgaris (strain ATCC 29579 / DSM 644 / CCUG 34227 / NCIMB 8303 / VKM B-1760 / Hildenborough) (Desulfovibrio vulgaris) protein is tRNA pseudouridine synthase A.